The chain runs to 597 residues: FERM domain-containing protein 3 (597 aa).

In terms of domain architecture, FERM spans 32–312 (MRCTIRLLDD…ENQAFYKYAK (281 aa)). Positions 383-403 (LLPSPSEQEEELPLGEGVPLP) are disordered. The chain crosses the membrane as a helical span at residues 531–551 (LLVVGLGLLLFVFPLLLLLLE).

As to expression, ovary-specific.

It is found in the membrane. In terms of biological role, putative tumor suppressor gene that may be implicated in the origin and progression of lung cancer. This Homo sapiens (Human) protein is FERM domain-containing protein 3 (FRMD3).